A 383-amino-acid chain; its full sequence is Oxysterol-binding protein-related protein 4B (383 aa).

Belongs to the OSBP family. As to expression, expressed in stems and flowers.

Its function is as follows. May be involved in the transport of sterols. The chain is Oxysterol-binding protein-related protein 4B (ORP4B) from Arabidopsis thaliana (Mouse-ear cress).